Here is a 268-residue protein sequence, read N- to C-terminus: Nickel import ATP-binding protein NikE (268 aa).

Positions 4-252 constitute an ABC transporter domain; sequence LNVSDLSHHY…SSDAGRVLQN (249 aa). 45–52 is a binding site for ATP; it reads GRSGCGKS.

It belongs to the ABC transporter superfamily. Nickel importer (TC 3.A.1.5.3) family. The complex is composed of two ATP-binding proteins (NikD and NikE), two transmembrane proteins (NikB and NikC) and a solute-binding protein (NikA).

It localises to the cell inner membrane. The enzyme catalyses Ni(2+)(out) + ATP + H2O = Ni(2+)(in) + ADP + phosphate + H(+). Functionally, part of the ABC transporter complex NikABCDE involved in nickel import. Responsible for energy coupling to the transport system. The chain is Nickel import ATP-binding protein NikE from Escherichia coli O157:H7.